The chain runs to 668 residues: Probable metal-nicotianamine transporter YSL5 (668 aa).

A compositionally biased stretch (low complexity) spans 1–11; sequence MPPPETSSAAA. Positions 1 to 22 are disordered; that stretch reads MPPPETSSAAAPSPPSPDPLPP. Pro residues predominate over residues 12–22; it reads PSPPSPDPLPP. Transmembrane regions (helical) follow at residues 27–47, 51–71, 102–122, 147–167, 209–229, 268–288, 315–335, 383–403, 410–430, 443–463, 501–521, 557–577, 595–615, and 633–653; these read LTLRGVAVAAVLGSLLCVVIH, LTVGVIPALNVASGLLAFFLA, CAIACGSLAFSGCSSSYIFAM, LGWMIGFMFLIALIGPFSIVM, LVKYMSLSFGWSFFKWFFSGV, IVNCSVFLGSVISWGFLWPFI, IAISVILGDGLYNLVKVFLII, LAVSGYIVLAAISTVAVPIIF, LVLVCYFLAPAIAFCNSYGMG, IALFVFASLVGSDGGVIAGLA, IGVALGCIIAPLTLWLFWTAF, LEICCVFFLAALIINLMKDVV, FYIGAYFGVDMFIGTLILFAW, and GLICGDGVWSIPSAVLSILGV.

Belongs to the YSL (TC 2.A.67.2) family. Expressed in roots.

It localises to the membrane. Functionally, may be involved in the transport of nicotianamine-chelated metals. The polypeptide is Probable metal-nicotianamine transporter YSL5 (YSL5) (Oryza sativa subsp. japonica (Rice)).